We begin with the raw amino-acid sequence, 748 residues long: Pentatricopeptide repeat-containing protein At3g13880 (748 aa).

17 PPR repeats span residues 46-80 (DSEG…SLNP), 81-111 (CLYL…MPER), 112-146 (NIIS…NLKL), 147-181 (DKFT…GLSQ), 182-212 (QVFL…CDER), 213-247 (DQVS…GLNL), 248-285 (TTYA…GMEF), 286-316 (DIVV…MPSK), 317-356 (NVVT…GLEP), 357-391 (SPST…NFQS), 392-422 (DEFI…TSKQ), 423-457 (DIAS…HIRP), 458-492 (EEYT…GIDA), 493-523 (FTSV…VQNP), 524-558 (DVAT…GIKP), 559-589 (NQQA…MKND), and 595-629 (NEKH…DHPV). The tract at residues 630–705 (TWRALLSSCR…EPALSWIVIG (76 aa)) is type E motif. The type E(+) motif stretch occupies residues 706 to 736 (NQTHSFAVADLSHPSSQMIYTMLETMDNVDF).

This sequence belongs to the PPR family. PCMP-E subfamily.

This Arabidopsis thaliana (Mouse-ear cress) protein is Pentatricopeptide repeat-containing protein At3g13880 (PCMP-E89).